The chain runs to 448 residues: Probable protein phosphatase 2C 74 (448 aa).

Residues 1 to 48 (MGSCLSSSGGGGSRRSLHGSPHVPGPGRRKRPPKRRPGSCSSSFDNTE) are disordered. Glycine 2 carries N-myristoyl glycine lipidation. A compositionally biased stretch (basic residues) spans 27–37 (GRRKRPPKRRP). The PPM-type phosphatase domain occupies 67–384 (TVSLFSQQGK…DDCAVVCLFL (318 aa)). Mn(2+) contacts are provided by aspartate 103, glycine 104, aspartate 329, and aspartate 375. The tract at residues 401–431 (HINNGVTEPEPDTASSSTPDSGTGSPELNGV) is disordered. A compositionally biased stretch (low complexity) spans 412-426 (DTASSSTPDSGTGSP).

The protein belongs to the PP2C family. Interacts with KIN10. Mg(2+) serves as cofactor. Mn(2+) is required as a cofactor. As to expression, expressed in the whole plant.

The protein localises to the cell membrane. The catalysed reaction is O-phospho-L-seryl-[protein] + H2O = L-seryl-[protein] + phosphate. It carries out the reaction O-phospho-L-threonyl-[protein] + H2O = L-threonyl-[protein] + phosphate. In terms of biological role, acts as a protein phosphatase. This is Probable protein phosphatase 2C 74 from Arabidopsis thaliana (Mouse-ear cress).